The following is a 143-amino-acid chain: Large ribosomal subunit protein uL13 (143 aa).

This sequence belongs to the universal ribosomal protein uL13 family. In terms of assembly, part of the 50S ribosomal subunit.

Its function is as follows. This protein is one of the early assembly proteins of the 50S ribosomal subunit, although it is not seen to bind rRNA by itself. It is important during the early stages of 50S assembly. The protein is Large ribosomal subunit protein uL13 of Clostridioides difficile (strain 630) (Peptoclostridium difficile).